We begin with the raw amino-acid sequence, 252 residues long: 5'-nucleotidase SurE (252 aa).

A divalent metal cation contacts are provided by Asp8, Asp9, Ser40, and Asn93.

The protein belongs to the SurE nucleotidase family. A divalent metal cation is required as a cofactor.

The protein resides in the cytoplasm. It catalyses the reaction a ribonucleoside 5'-phosphate + H2O = a ribonucleoside + phosphate. Nucleotidase that shows phosphatase activity on nucleoside 5'-monophosphates. This Erythrobacter litoralis (strain HTCC2594) protein is 5'-nucleotidase SurE.